The sequence spans 139 residues: D-ribose pyranase (139 aa).

Histidine 20 (proton donor) is an active-site residue. Residues aspartate 28, histidine 106, and 128 to 130 (YAN) each bind substrate.

This sequence belongs to the RbsD / FucU family. RbsD subfamily. As to quaternary structure, homodecamer.

It is found in the cytoplasm. It catalyses the reaction beta-D-ribopyranose = beta-D-ribofuranose. It functions in the pathway carbohydrate metabolism; D-ribose degradation; D-ribose 5-phosphate from beta-D-ribopyranose: step 1/2. Functionally, catalyzes the interconversion of beta-pyran and beta-furan forms of D-ribose. The chain is D-ribose pyranase from Shewanella pealeana (strain ATCC 700345 / ANG-SQ1).